A 609-amino-acid polypeptide reads, in one-letter code: Large ribosomal subunit assembly factor BipA (609 aa).

The tr-type G domain maps to 3–198; that stretch reads QNIRNIAIIA…AIIKYAPAPN (196 aa). GTP-binding positions include 15–20 and 128–131; these read DHGKTT and NKID.

It belongs to the TRAFAC class translation factor GTPase superfamily. Classic translation factor GTPase family. BipA subfamily. In terms of assembly, monomer.

The protein localises to the cytoplasm. The enzyme catalyses GTP + H2O = GDP + phosphate + H(+). In terms of biological role, a 50S ribosomal subunit assembly protein with GTPase activity, required for 50S subunit assembly at low temperatures, may also play a role in translation. Binds GTP and analogs. Binds the 70S ribosome between the 30S and 50S subunits, in a similar position as ribosome-bound EF-G; it contacts a number of ribosomal proteins, both rRNAs and the A-site tRNA. The sequence is that of Large ribosomal subunit assembly factor BipA from Buchnera aphidicola subsp. Schizaphis graminum (strain Sg).